The chain runs to 229 residues: MVHPFLFLQFFRHLLTPLGISEGGADAIAYTWLIIALLLIVSILATKGLKSVPGKMQNFMEVIIGGIENMVVETMGEHGKPFFPLIATLALFILVSNLIGLIPGFFPPTANINTTAACAVIVFVTTHIVGIKEHGVKYIKHFLGPILWLAPMMFFIEVIGHFSRVISLTLRLFGNMNGHELVLMIFFGLAPFLVPLPMMLMGVLVSFIQAFVFMLLAMIYIQGSLEEGH.

6 helical membrane-spanning segments follow: residues 25–45 (ADAI…SILA), 82–102 (FFPL…IGLI), 111–131 (NINT…IVGI), 142–162 (FLGP…IGHF), 181–201 (LVLM…MMLM), and 202–222 (GVLV…IYIQ).

It belongs to the ATPase A chain family. F-type ATPases have 2 components, CF(1) - the catalytic core - and CF(0) - the membrane proton channel. CF(1) has five subunits: alpha(3), beta(3), gamma(1), delta(1), epsilon(1). CF(0) has three main subunits: a(1), b(2) and c(9-12). The alpha and beta chains form an alternating ring which encloses part of the gamma chain. CF(1) is attached to CF(0) by a central stalk formed by the gamma and epsilon chains, while a peripheral stalk is formed by the delta and b chains.

The protein localises to the cell inner membrane. Functionally, key component of the proton channel; it plays a direct role in the translocation of protons across the membrane. The protein is ATP synthase subunit a of Geotalea daltonii (strain DSM 22248 / JCM 15807 / FRC-32) (Geobacter daltonii).